The primary structure comprises 377 residues: Ribosomal RNA large subunit methyltransferase G (377 aa).

Belongs to the methyltransferase superfamily. RlmG family.

Its subcellular location is the cytoplasm. It carries out the reaction guanosine(1835) in 23S rRNA + S-adenosyl-L-methionine = N(2)-methylguanosine(1835) in 23S rRNA + S-adenosyl-L-homocysteine + H(+). Specifically methylates the guanine in position 1835 (m2G1835) of 23S rRNA. The polypeptide is Ribosomal RNA large subunit methyltransferase G (Aeromonas salmonicida (strain A449)).